The sequence spans 343 residues: Signal peptide peptidase 1 (343 aa).

The Lumenal segment spans residues 1–19 (MKTHERAANLALAGLSLAP). A helical membrane pass occupies residues 20 to 40 (LVVKVEPNVNVILTACLAVYV). Topologically, residues 41–62 (GCYRSVKPTPPSETMSKEHAMR) are cytoplasmic. The chain crosses the membrane as a helical span at residues 63–83 (FPLVGSAMLLSLFLLFKFLSK). The Lumenal segment spans residues 84-87 (DLVN). Residues 88-108 (AVLTAYFFILGIAALCATLLP) traverse the membrane as a helical segment. Residues 109–136 (SIKRFLPKEWNDNAIVWCAPFFHSLSVE) are Cytoplasmic-facing. Residues 137–157 (FTKSQVVASIPGFFFCIWYAA) form a helical membrane-spanning segment. Topologically, residues 158–160 (KKH) are lumenal. A helical transmembrane segment spans residues 161 to 181 (WLANNVLGISFCIQGIEMLSL). Over 182-188 (GSFKTGA) the chain is Cytoplasmic. A helical membrane pass occupies residues 189–209 (ILLAGLFFYDIFWVFFTPVMV). Residue aspartate 198 is part of the active site. Residues 210-230 (SVAKSFDAPIKLLFPTGDAAR) are Lumenal-facing. Residues 231–251 (PFSMLGLGDIVIPGIFVALAL) form a helical membrane-spanning segment. The active site involves aspartate 239. The Cytoplasmic portion of the chain corresponds to 252 to 266 (RFDVSRGIKNRYFNS). Residues 267–287 (AFLGYTVGLTVTIIVMNWFQA) form a helical membrane-spanning segment. At 288–290 (AQP) the chain is on the lumenal side. The PAL signature appears at 290-292 (PAL). The chain crosses the membrane as a helical span at residues 291–311 (ALLYIVPGVIGFVAVHCLWNG). Residues 312–343 (EVKPLLEYNESKAEEEDAVEEDTDSKQNKKEE) lie on the Cytoplasmic side of the membrane. The segment at 322–343 (SKAEEEDAVEEDTDSKQNKKEE) is disordered. The span at 324-334 (AEEEDAVEEDT) shows a compositional bias: acidic residues. The Endoplasmic reticulum targeting signal motif lies at 340-343 (KKEE).

This sequence belongs to the peptidase A22B family. Ubiquitous.

The protein resides in the endoplasmic reticulum membrane. In terms of biological role, intramembrane-cleaving aspartic protease (I-CLiP) that cleaves type II membrane signal peptides in the hydrophobic plane of the membrane. Catalyzes intramembrane proteolysis of some signal peptides after they have been cleaved from a preprotein, resulting in the release of the fragment from the ER membrane into the cytoplasm. This Oryza sativa subsp. japonica (Rice) protein is Signal peptide peptidase 1 (SPP1).